The primary structure comprises 241 residues: RecQ-mediated genome instability protein 1 (241 aa).

The protein belongs to the RMI1 family. As to quaternary structure, forms a complex with SGS1 and TOP3.

It localises to the cytoplasm. Its subcellular location is the nucleus. Functionally, structure-specific DNA-binding protein with a preference for cruciform structures. Also binds single-stranded DNA (ssDNA). Functions together with SGS1 and TOP3 to maintain genome integrity. Essential for proper meiotic cell division. Required for normal S-phase progression and DNA damage response. Required for resistance to the DNA-damaging agent methyl methanesulfonate (MMS). This Saccharomyces cerevisiae (strain ATCC 204508 / S288c) (Baker's yeast) protein is RecQ-mediated genome instability protein 1.